Consider the following 90-residue polypeptide: UPF0512 protein L (90 aa).

Belongs to the UPF0512 family.

The sequence is that of UPF0512 protein L from Dictyostelium discoideum (Social amoeba).